Consider the following 244-residue polypeptide: MGHKVHPTGIRLGIAKDWNSKWYANKAEFASYLAADLKVREMLRKKLAQAGVSKILIERPAKTARVTIHTARPGVVIGKRGEDIEKLRKEVSQLMGVPAHINVTEVRKPELDAQLVAESIAQQLERRIMFRRAMKRSVGNAMRLGALGIKVNVAGRLNGAEIARSEWYREGRVPLHTLRADIDYGFAEASTTYGIIGIKVWIYKGEVFDFSQVGQEKQDDSPRNDRNDRGDRGDRPSRPAREAR.

Residues 39–107 (VREMLRKKLA…PAHINVTEVR (69 aa)) form the KH type-2 domain. The disordered stretch occupies residues 213 to 244 (VGQEKQDDSPRNDRNDRGDRGDRPSRPAREAR). Basic and acidic residues predominate over residues 216-244 (EKQDDSPRNDRNDRGDRGDRPSRPAREAR).

The protein belongs to the universal ribosomal protein uS3 family. As to quaternary structure, part of the 30S ribosomal subunit. Forms a tight complex with proteins S10 and S14.

Its function is as follows. Binds the lower part of the 30S subunit head. Binds mRNA in the 70S ribosome, positioning it for translation. This chain is Small ribosomal subunit protein uS3, found in Xanthomonas euvesicatoria pv. vesicatoria (strain 85-10) (Xanthomonas campestris pv. vesicatoria).